A 481-amino-acid polypeptide reads, in one-letter code: Transcription factor TGA9 (481 aa).

The interval 91–181 (QTLPTESSKS…GKQLDAKTLR (91 aa)) is disordered. The span at 97 to 109 (SSKSGGESSDSGS) shows a compositional bias: low complexity. The span at 110 to 126 (ANFSGKAESQQPESPMS) shows a compositional bias: polar residues. The segment covering 143-155 (SSSTSGLPSTSRT) has biased composition (low complexity). The short motif at 165–172 (KRKATTSG) is the Nuclear localization signal element. The region spanning 176-220 (DAKTLRRLAQNREAARKSRLRKKAYVQQLESSRIKLSQLEQELQR) is the bZIP domain. The interval 178–198 (KTLRRLAQNREAARKSRLRKK) is basic motif. The leucine-zipper stretch occupies residues 204 to 218 (LESSRIKLSQLEQEL). A DOG1 domain is found at 242 to 450 (AAIFDMEYGR…RALSSLWLSR (209 aa)).

The protein belongs to the bZIP family. Homodimer. Binds DNA as a dimer. Interacts with floral glutaredoxins GRXC7/ROXY1 and GRXC8/ROXY2 in the nucleus. Interacts with TGA1, TGA2, TGA3, TGA4, TGA5, TGA6, TGA7, TGA10 and PAN. In terms of tissue distribution, mostly expressed in stems, inflorescence apex and flowers, and, to a lower extent, in seedlings, leaves and siliques.

It is found in the nucleus. Functionally, together with TGA10, basic leucine-zipper transcription factor required for anther development, probably via the activation of SPL expression in anthers and via the regulation of genes with functions in early and middle tapetal development. Required for signaling responses to pathogen-associated molecular patterns (PAMPs) such as flg22 that involves chloroplastic reactive oxygen species (ROS) production and subsequent expression of H(2)O(2)-responsive genes. This chain is Transcription factor TGA9, found in Arabidopsis thaliana (Mouse-ear cress).